A 257-amino-acid polypeptide reads, in one-letter code: Global transcriptional regulator CodY (257 aa).

The GAF domain stretch occupies residues 1-155 (MSLLSKTREL…AATVLGMEIL (155 aa)). A DNA-binding region (H-T-H motif) is located at residues 203 to 222 (ASKVADRVGITRSVIVNALR).

It belongs to the CodY family.

Its subcellular location is the cytoplasm. In terms of biological role, DNA-binding global transcriptional regulator which is involved in the adaptive response to starvation and acts by directly or indirectly controlling the expression of numerous genes in response to nutrient availability. During rapid exponential growth, CodY is highly active and represses genes whose products allow adaptation to nutrient depletion. In Staphylococcus carnosus (strain TM300), this protein is Global transcriptional regulator CodY.